The sequence spans 982 residues: Protein phosphatase 1 regulatory subunit 12B (982 aa).

Positions 1-24 (MAELEHLGGKRAESARMRRAEQLR) are enriched in basic and acidic residues. The disordered stretch occupies residues 1–50 (MAELEHLGGKRAESARMRRAEQLRRWRGSLTEQEPAERRGAGRQPLTRRG). Ser-29 carries the phosphoserine modification. ANK repeat units lie at residues 57 to 86 (EDGA…DINT), 90 to 119 (DGLT…NVNQ), 123 to 152 (EGWT…SVGI), 216 to 245 (SGAT…ELNV), and 249 to 278 (DGWT…DMDI). 4 disordered regions span residues 342–517 (EETP…RESA), 556–579 (RTPH…SSTP), 606–864 (TDSS…EARE), and 918–948 (AQQK…KMSE). A compositionally biased stretch (acidic residues) spans 362–374 (SEEEEGEDEASES). Over residues 375-385 (ETEKEADKKPE) the composition is skewed to basic and acidic residues. Over residues 389–401 (NHSNSESKSSITE) the composition is skewed to polar residues. Over residues 411–421 (FSASSARRFSS) the composition is skewed to low complexity. The residue at position 445 (Thr-445) is a Phosphothreonine. A compositionally biased stretch (low complexity) spans 466-478 (SSIYRSSSSPRIS). The span at 482 to 491 (DNKDKERENK) shows a compositional bias: basic and acidic residues. Residues 623–632 (VRDEEAESLR) are compositionally biased toward basic and acidic residues. Residues 633–643 (KARSRQARQTR) show a composition bias toward basic residues. The residue at position 646 (Thr-646) is a Phosphothreonine. Residues 656-680 (EAERTFSRSRAERQAQEQPREKPTD) show a composition bias toward basic and acidic residues. The segment covering 731 to 742 (TTPASPSTSRPS) has biased composition (low complexity). A compositionally biased stretch (polar residues) spans 743–755 (LYTSSHLLWTNRF). Residues 797-807 (ERRRPKERRRG) are compositionally biased toward basic residues. Thr-808 is modified (phosphothreonine). Residues 824–836 (EEVKETWHERLSR) show a composition bias toward basic and acidic residues. Ser-839 carries the phosphoserine modification. The segment covering 840–849 (GGSNPTTSDS) has biased composition (polar residues). Composition is skewed to basic and acidic residues over residues 850 to 864 (YGDR…EARE), 918 to 927 (AQQKQEKTSD), and 933 to 948 (EMEK…KMSE). Position 947 is a phosphoserine (Ser-947).

As to quaternary structure, PP1 comprises a catalytic subunit, PPP1CA, PPP1CB or PPP1CC, and one or several targeting or regulatory subunits. PPP1R12B mediates binding to myosin. Isoform 3 and isoform 4 bind PPP1R12A, but not isoform 1 of PPP1R12B itself. Binds IL16. Detected in skeletal muscle, fetal and adult heart, brain, placenta, kidney, spleen, thymus, pancreas and lung. Isoform 3 and isoform 4 are heart specific.

The protein resides in the cytoplasm. The protein localises to the cytoskeleton. It localises to the stress fiber. Functionally, regulates myosin phosphatase activity. Augments Ca(2+) sensitivity of the contractile apparatus. This Homo sapiens (Human) protein is Protein phosphatase 1 regulatory subunit 12B (PPP1R12B).